A 293-amino-acid polypeptide reads, in one-letter code: AM-toxin biosynthesis protein 14 (293 aa).

Helical transmembrane passes span 33 to 53, 73 to 93, 148 to 168, 183 to 203, and 221 to 241; these read SATASLPIGFSSLFLLTEVYI, IAVNTGLWICCLVLSIVALVL, GVLALVLTACLQCAAAGLCVW, LVPILHVGWGLHYTVFLLWIL, and VWCLLVAPLFISALVGATPLT.

The protein localises to the membrane. Its pathway is mycotoxin biosynthesis. Functionally, part of the gene clusters that mediate the biosynthesis of AM-toxins, host-selective toxins (HSTs) causing Alternaria blotch on apple, a worldwide distributed disease. AM-toxins are cyclic depsipeptides containing the 3 residues 2-hydroxy-isovaleric acid (2-HIV), dehydroalanine, L-alanine which are common for all 3 AM-toxins I to III. The fourth precursor is L-alpha-amino-methoxyphenyl-valeric acid (L-Amv) for AM-toxin I, L-alpha-amino-phenyl-valeric acid (L-Apv) for AM-toxin II, and L-alpha-amino-hydroxyphenyl-valeric acid (L-Ahv) for AM-toxin III. AM-toxins have two target sites for affecting susceptible apple cells; they cause invagination of the plasma membrane and electrolyte loss and chloroplast disorganization. The non-ribosomal peptide synthetase AMT1 contains 4 catalytic modules and is responsible for activation of each residue in AM-toxin. The aldo-keto reductase AMT2 catalyzes the conversion of 2-keto-isovaleric acid (2-KIV) to 2-hydroxy-isovaleric acid (2-HIV), one of the precursor residues incorporated by AMT1 during AM-toxin biosynthesis, by reduction of its ketone to an alcohol. The cytochrome P450 monooxygenase AMT3 and the thioesterase AMT4 are also important for AM-toxin production, but their exact function within the AM-toxin biosynthesis are not known yet. Up to 21 proteins (including AMT1 to AMT4) are predicted to be involved in AM-toxin biosynthesis since their expression ishighly up-regulated in AM-toxin-producing cultures. The chain is AM-toxin biosynthesis protein 14 from Alternaria alternata (Alternaria rot fungus).